The following is a 108-amino-acid chain: UPF0102 protein Sama_3355 (108 aa).

Belongs to the UPF0102 family.

The polypeptide is UPF0102 protein Sama_3355 (Shewanella amazonensis (strain ATCC BAA-1098 / SB2B)).